The sequence spans 213 residues: Validoxylamine A 7'-phosphate phosphatase (213 aa).

Aspartate 8 (nucleophile) is an active-site residue. A divalent metal cation-binding residues include aspartate 8 and aspartate 10. Substrate is bound by residues 8–10, 107–108, and lysine 140; these read DLD and TS. The Proton donor role is filled by aspartate 10. Aspartate 165 serves as a coordination point for a divalent metal cation.

This sequence belongs to the HAD-like hydrolase superfamily. CbbY/CbbZ/Gph/YieH family. The cofactor is Mg(2+). Mn(2+) is required as a cofactor. Co(2+) serves as cofactor.

It carries out the reaction validoxylamine A 7'-phosphate + H2O = validoxylamine A + phosphate. Functionally, involved in the biosynthesis of the antifungal agent validamycin A. Catalyzes the dephosphorylation of validoxylamine A 7'-phosphate to yield validoxylamine A. VldH is also able to convert trehalose 6-phosphate to trehalose. The protein is Validoxylamine A 7'-phosphate phosphatase of Streptomyces hygroscopicus subsp. limoneus.